The primary structure comprises 798 residues: Exo-1,4-beta-xylosidase xlnD (798 aa).

Residues 1–20 form the signal peptide; the sequence is MPGAASIVAVLAALLPTALG. 4 N-linked (GlcNAc...) asparagine glycosylation sites follow: N23, N87, N142, and N237. The active site involves D310. N-linked (GlcNAc...) asparagine glycosylation is found at N326, N391, N404, N443, N480, N522, N618, N645, N658, N685, and N707.

It belongs to the glycosyl hydrolase 3 family.

The protein localises to the secreted. It carries out the reaction Hydrolysis of (1-&gt;4)-beta-D-xylans, to remove successive D-xylose residues from the non-reducing termini.. Its pathway is glycan degradation; xylan degradation. Its function is as follows. Xylan 1,4-beta-xylosidase involved in the hydrolysis of xylan, a major structural heterogeneous polysaccharide found in plant biomass representing the second most abundant polysaccharide in the biosphere, after cellulose. The chain is Exo-1,4-beta-xylosidase xlnD (xlnD) from Aspergillus oryzae (strain ATCC 42149 / RIB 40) (Yellow koji mold).